We begin with the raw amino-acid sequence, 714 residues long: Phosphoribosylformylglycinamidine synthase subunit PurL (714 aa).

The active site involves H34. Y37 contributes to the ATP binding site. E78 lines the Mg(2+) pocket. Substrate is bound by residues 79 to 82 (SHNH) and R101. The Proton acceptor role is filled by H80. Mg(2+) is bound at residue D102. Residue Q226 coordinates substrate. D254 serves as a coordination point for Mg(2+). 298–300 (ESQ) is a binding site for substrate. ATP contacts are provided by D474 and G511. N512 contributes to the Mg(2+) binding site. Substrate is bound at residue S514.

The protein belongs to the FGAMS family. As to quaternary structure, monomer. Part of the FGAM synthase complex composed of 1 PurL, 1 PurQ and 2 PurS subunits.

It is found in the cytoplasm. The catalysed reaction is N(2)-formyl-N(1)-(5-phospho-beta-D-ribosyl)glycinamide + L-glutamine + ATP + H2O = 2-formamido-N(1)-(5-O-phospho-beta-D-ribosyl)acetamidine + L-glutamate + ADP + phosphate + H(+). It participates in purine metabolism; IMP biosynthesis via de novo pathway; 5-amino-1-(5-phospho-D-ribosyl)imidazole from N(2)-formyl-N(1)-(5-phospho-D-ribosyl)glycinamide: step 1/2. Part of the phosphoribosylformylglycinamidine synthase complex involved in the purines biosynthetic pathway. Catalyzes the ATP-dependent conversion of formylglycinamide ribonucleotide (FGAR) and glutamine to yield formylglycinamidine ribonucleotide (FGAM) and glutamate. The FGAM synthase complex is composed of three subunits. PurQ produces an ammonia molecule by converting glutamine to glutamate. PurL transfers the ammonia molecule to FGAR to form FGAM in an ATP-dependent manner. PurS interacts with PurQ and PurL and is thought to assist in the transfer of the ammonia molecule from PurQ to PurL. This is Phosphoribosylformylglycinamidine synthase subunit PurL from Methanothermobacter thermautotrophicus (strain ATCC 29096 / DSM 1053 / JCM 10044 / NBRC 100330 / Delta H) (Methanobacterium thermoautotrophicum).